The primary structure comprises 369 residues: Peptide chain release factor 1 (369 aa).

Gln238 is subject to N5-methylglutamine.

Belongs to the prokaryotic/mitochondrial release factor family. In terms of processing, methylated by PrmC. Methylation increases the termination efficiency of RF1.

Its subcellular location is the cytoplasm. Functionally, peptide chain release factor 1 directs the termination of translation in response to the peptide chain termination codons UAG and UAA. The chain is Peptide chain release factor 1 from Parabacteroides distasonis (strain ATCC 8503 / DSM 20701 / CIP 104284 / JCM 5825 / NCTC 11152).